The sequence spans 547 residues: uncharacterized protein (547 aa).

Residues 1–18 are compositionally biased toward polar residues; sequence MEYHPSSQSPQVNPGMES. Disordered regions lie at residues 1–41 and 80–165; these read MEYH…LQHP and PSYP…VKRQ. Composition is skewed to low complexity over residues 19–29 and 83–94; these read QQGGYTYTYQQ and PQSSSAPSNNSY. Pro residues predominate over residues 121 to 135; it reads VPSPSPIEMVPPSPP. Over residues 136–160 the composition is skewed to polar residues; sequence KTGSNNSAPVTGKTVQSGNALNNSG. The zn(2)-C6 fungal-type DNA-binding region spans 174 to 201; that stretch reads CLTCRKRRIKCDERKPICYNCIKSKRQC.

It is found in the nucleus. This is an uncharacterized protein from Schizosaccharomyces pombe (strain 972 / ATCC 24843) (Fission yeast).